A 277-amino-acid chain; its full sequence is Large ribosomal subunit protein uL2 (277 aa).

Disordered stretches follow at residues 1 to 23 (MAIK…DFAE), 36 to 58 (PLHK…GGGH), and 219 to 277 (TVRG…RKNK). The span at 8 to 20 (PTSNGRRGMTSSD) shows a compositional bias: polar residues. Basic residues predominate over residues 258-277 (KTRKKKNKSDKFIVRRRKNK).

It belongs to the universal ribosomal protein uL2 family. Part of the 50S ribosomal subunit. Forms a bridge to the 30S subunit in the 70S ribosome.

Its function is as follows. One of the primary rRNA binding proteins. Required for association of the 30S and 50S subunits to form the 70S ribosome, for tRNA binding and peptide bond formation. It has been suggested to have peptidyltransferase activity; this is somewhat controversial. Makes several contacts with the 16S rRNA in the 70S ribosome. The chain is Large ribosomal subunit protein uL2 from Bacillus licheniformis (strain ATCC 14580 / DSM 13 / JCM 2505 / CCUG 7422 / NBRC 12200 / NCIMB 9375 / NCTC 10341 / NRRL NRS-1264 / Gibson 46).